The sequence spans 287 residues: 4,4'-diapophytoene synthase (287 aa).

Residues 18-21, Tyr41, and Arg45 each bind (2E,6E)-farnesyl diphosphate; that span reads HSKS. Asp48 and Asp52 together coordinate Mg(2+). Gln165 contacts (2E,6E)-farnesyl diphosphate. Residue Asn168 participates in Mg(2+) binding. (2E,6E)-farnesyl diphosphate is bound at residue Arg171. Asp172 contributes to the Mg(2+) binding site. Tyr248 is a (2E,6E)-farnesyl diphosphate binding site.

Belongs to the phytoene/squalene synthase family. CrtM subfamily. Requires Mg(2+) as cofactor.

The catalysed reaction is 2 (2E,6E)-farnesyl diphosphate = 15-cis-4,4'-diapophytoene + 2 diphosphate. Its pathway is carotenoid biosynthesis; staphyloxanthin biosynthesis; staphyloxanthin from farnesyl diphosphate: step 1/5. Involved in the biosynthesis of the yellow-orange carotenoid staphyloxanthin, which plays a role in the virulence via its protective function against oxidative stress. Catalyzes the head-to-head condensation of two molecules of farnesyl diphosphate (FPP) into the colorless C(30) carotenoid 4,4'-diapophytoene (dehydrosqualene). This Staphylococcus aureus (strain Mu50 / ATCC 700699) protein is 4,4'-diapophytoene synthase (crtM).